A 302-amino-acid chain; its full sequence is Catechol 1,2-dioxygenase (302 aa).

Fe cation is bound by residues tyrosine 164, tyrosine 198, histidine 222, and histidine 224.

It belongs to the intradiol ring-cleavage dioxygenase family. It depends on Fe(3+) as a cofactor.

It carries out the reaction catechol + O2 = cis,cis-muconate + 2 H(+). It functions in the pathway aromatic compound metabolism; beta-ketoadipate pathway; 5-oxo-4,5-dihydro-2-furylacetate from catechol: step 1/3. The chain is Catechol 1,2-dioxygenase (pheB) from Pseudomonas sp. (strain EST1001).